The chain runs to 416 residues: Histidine--tRNA ligase (416 aa).

This sequence belongs to the class-II aminoacyl-tRNA synthetase family. As to quaternary structure, homodimer.

The protein resides in the cytoplasm. It carries out the reaction tRNA(His) + L-histidine + ATP = L-histidyl-tRNA(His) + AMP + diphosphate + H(+). In Clostridium kluyveri (strain NBRC 12016), this protein is Histidine--tRNA ligase.